The chain runs to 252 residues: Auxin-induced in root cultures protein 12 (252 aa).

Positions 1 to 25 (MASSSSSLLILAVACFVSLISPAIS) are cleaved as a signal peptide. A DOMON domain is found at 49–165 (LNSYLHYTYN…DSVNQVWQIG (117 aa)). N-linked (GlcNAc...) asparagine glycosylation is found at Asn-58 and Asn-61. Met-91 is a heme binding site. N-linked (GlcNAc...) asparagine glycosylation is found at Asn-114 and Asn-167. Residue His-176 participates in heme binding. A disordered region spans residues 193–224 (EDAAPGSAPSPGSAPAPGTSGSTTPGTAAGGP). Low complexity predominate over residues 195-219 (AAPGSAPSPGSAPAPGTSGSTTPGT). A lipid anchor (GPI-anchor amidated asparagine) is attached at Asn-226. The propeptide at 227–252 (AGSLTRNVNFGVNLGILVLLGSIFIF) is removed in mature form.

Heme is required as a cofactor.

The protein localises to the cell membrane. One-heme-containing cytochrome. The protein is Auxin-induced in root cultures protein 12 (AIR12) of Arabidopsis thaliana (Mouse-ear cress).